A 350-amino-acid chain; its full sequence is MSQLQVRHDWKREEIEALFALPMNDLLFKAHSIHREVYDPNEVQISRLLSIKTGACPEDCKYCPQSARYDTGLEKERLLAMETVLTEARSAKAAGASRFCMGAAWRNPKEKDMPYLKQMVQEVKALGMETCMTLGMLSEDQANDLASAGLDYYNHNLDTSPEYYGDVITTRTYQNRLDTLTNVRASGMKVCSGGIVGMGEKATDRAGLLQQLANLPQHPDSVPINMLVKVAGTPFEKLDDLDPLEFVRTIAVARILMPLSRVRLSAGRENMSDELQAMCFFAGANSIFYGCKLLTTPNPEESDDMGLFRRLGLRPEQGAAAKLEEESAVLAKAAAYQDKSSAQFYDAGAL.

A Radical SAM core domain is found at 41-268; that stretch reads NEVQISRLLS…LSRVRLSAGR (228 aa). Residues Cys56, Cys60, and Cys63 each coordinate [4Fe-4S] cluster. Residues Cys100, Cys131, Cys191, and Arg263 each coordinate [2Fe-2S] cluster.

The protein belongs to the radical SAM superfamily. Biotin synthase family. As to quaternary structure, homodimer. Requires [4Fe-4S] cluster as cofactor. The cofactor is [2Fe-2S] cluster.

It catalyses the reaction (4R,5S)-dethiobiotin + (sulfur carrier)-SH + 2 reduced [2Fe-2S]-[ferredoxin] + 2 S-adenosyl-L-methionine = (sulfur carrier)-H + biotin + 2 5'-deoxyadenosine + 2 L-methionine + 2 oxidized [2Fe-2S]-[ferredoxin]. It functions in the pathway cofactor biosynthesis; biotin biosynthesis; biotin from 7,8-diaminononanoate: step 2/2. Catalyzes the conversion of dethiobiotin (DTB) to biotin by the insertion of a sulfur atom into dethiobiotin via a radical-based mechanism. The chain is Biotin synthase from Shewanella baltica (strain OS223).